The chain runs to 51 residues: Defensin-like protein 1 (51 aa).

The residue at position 1 (Q1) is a Pyrrolidone carboxylic acid. 4 cysteine pairs are disulfide-bonded: C4-C51, C15-C36, C21-C45, and C25-C47.

Forms oligomers in its native state.

Its function is as follows. Possesses antifungal activity sensitive to inorganic cations. This chain is Defensin-like protein 1, found in Sinapis alba (White mustard).